A 1338-amino-acid polypeptide reads, in one-letter code: Insulin receptor substrate 2 (1338 aa).

The segment covering 1–12 (MASPPRHGPPGP) has biased composition (pro residues). Disordered stretches follow at residues 1 to 31 (MASP…NHSV) and 49 to 72 (VLRG…QPPR). The region spanning 16–144 (DGPNLNNNNN…WYRALTDLVS (129 aa)) is the PH domain. Residues 19 to 28 (NLNNNNNNNN) are compositionally biased toward low complexity. Residues 53 to 66 (PGAGGDEATAGGGS) show a composition bias toward gly residues. Positions 194–298 (YREVWQVNLK…EAMKALKELF (105 aa)) constitute an IRS-type PTB domain. A disordered region spans residues 303–411 (RSKSQSSGSS…SHTLSGGCGG (109 aa)). Phosphoserine occurs at positions 306 and 346. Phosphothreonine is present on threonine 350. Serine 365, serine 384, serine 388, and serine 391 each carry phosphoserine. Arginine 412 carries the omega-N-methylarginine modification. Residues 428–537 (SRSMSMPVAH…PPARDGGGGG (110 aa)) are disordered. Over residues 444-453 (SPGSLSSSSG) the composition is skewed to low complexity. Residues 459 to 471 (YPPPPGPHPPLPH) show a composition bias toward pro residues. Residues 475 to 493 (HGPGQRPSSGSASASGSPS) show a composition bias toward low complexity. Threonine 520 is modified (phosphothreonine). Position 523 is a phosphoserine (serine 523). Threonine 527 is subject to Phosphothreonine. Tyrosine 540 carries the post-translational modification Phosphotyrosine; by INSR. The YXXM motif 1 motif lies at 540–543 (YGYM). Serine 560 is modified (phosphoserine; by PLK1). Residue serine 577 is modified to Phosphoserine. Threonine 579 and threonine 580 each carry phosphothreonine. Serine 594 is modified (phosphoserine). A YXXM motif 2 motif is present at residues 598–601 (YTLM). Serine 608 and serine 620 each carry phosphoserine. Tyrosine 653 and tyrosine 675 each carry phosphotyrosine; by INSR. 2 consecutive short sequence motifs (YXXM motif) follow at residues 653-656 (YMPM) and 675-678 (YMPM). Residues serine 679 and serine 682 each carry the phosphoserine modification. Residues 703–719 (PSAGPAGPAPTSAAGRT) are compositionally biased toward low complexity. The segment at 703–739 (PSAGPAGPAPTSAAGRTFPASGGGYKASSPAESSPED) is disordered. 2 positions are modified to phosphoserine: serine 735 and serine 736. A YXXM motif 5 motif is present at residues 742–745 (YMRM). A Phosphoserine modification is found at serine 770. At threonine 779 the chain carries Phosphothreonine. Serine 805 is subject to Phosphoserine. Residues 823-826 (YVLM) carry the YXXM motif 6 motif. At serine 828 the chain carries Phosphoserine. Positions 840 to 1101 (EPQATPGPSQ…KPEAARVASP (262 aa)) are disordered. Positions 859 to 870 (TQPPHPVVPSPV) are enriched in pro residues. Serine 915 bears the Phosphoserine mark. A Phosphotyrosine; by INSR modification is found at tyrosine 919. Over residues 938–967 (LLASAASSSSLLSASSPASSLGSGTPGTSS) the composition is skewed to low complexity. Serine 973 carries the phosphoserine modification. Phosphotyrosine; by INSR is present on tyrosine 978. A compositionally biased stretch (pro residues) spans 1013-1022 (PYPPLPPRPS). The YXXM motif 7 motif lies at 1072–1075 (YTEM). Threonine 1082 is modified (phosphothreonine). Pro residues predominate over residues 1083-1093 (PPQPIAAPPKP). A Phosphoserine modification is found at serine 1100. Phosphoserine; by PLK1 is present on serine 1109. Residues 1121-1296 (LQASQPPDPH…TRSLGGLISA (176 aa)) are disordered. Residues 1150-1165 (ETFSSTTTVTPVSPSF) show a composition bias toward low complexity. Threonine 1159 is subject to Phosphothreonine. A phosphoserine mark is found at serine 1162, serine 1174, serine 1176, and serine 1186. Positions 1174–1183 (SASVENVSLR) are enriched in polar residues. Over residues 1188-1198 (GGVGVGPGGGD) the composition is skewed to gly residues. At serine 1203 the chain carries Phosphoserine. Over residues 1224-1236 (QPGGLVGCPGSGG) the composition is skewed to gly residues. Tyrosine 1253 is modified (phosphotyrosine; by INSR). A compositionally biased stretch (pro residues) spans 1263-1277 (GLPPQPQPPPPPLPQ). A Glycyl lysine isopeptide (Lys-Gly) (interchain with G-Cter in ubiquitin) cross-link involves residue lysine 1331.

Interacts with PHIP. Interacts with SH2B1; this interaction enhances leptin-induced activation of the PI3-kinase pathway. Interacts with GRB2. Interacts with PIK3R1. Interacts with DVL2; this interaction promotes the Wnt/beta-catenin signaling pathway. Post-translationally, phosphorylation fluctuates in a cell-cycle dependent manner with hyperphosphorylation during mitosis. Phosphorylated at Ser-560 and Ser-1109 by PLK1; these phosphorylations prevent the activation of the PI3K pathway upon growth factor stimulation by inhibiting the binding between IRS2 and the PI3K pathway components and increasing the level of IRS2 protein degradation. In addition, they prevent premature mitotic exit. In terms of processing, monoubiquitinated by NEDD4; leading to enhanced IGF1 signaling. During cell cycle, ubiquitination and proteasomal degradation are controlled by FZR1.

It localises to the cytoplasm. It is found in the cytosol. Signaling adapter protein that participates in the signal transduction from two prominent receptor tyrosine kinases, insulin receptor/INSR and insulin-like growth factor I receptor/IGF1R. Plays therefore an important role in development, growth, glucose homeostasis as well as lipid metabolism. Upon phosphorylation by the insulin receptor, functions as a signaling scaffold that propagates insulin action through binding to SH2 domain-containing proteins including the p85 regulatory subunit of PI3K, NCK1, NCK2, GRB2 or SHP2. Recruitment of GRB2 leads to the activation of the guanine nucleotide exchange factor SOS1 which in turn triggers the Ras/Raf/MEK/MAPK signaling cascade. Activation of the PI3K/AKT pathway is responsible for most of insulin metabolic effects in the cell, and the Ras/Raf/MEK/MAPK is involved in the regulation of gene expression and in cooperation with the PI3K pathway regulates cell growth and differentiation. Acts a positive regulator of the Wnt/beta-catenin signaling pathway through suppression of DVL2 autophagy-mediated degradation leading to cell proliferation. Plays a role in cell cycle progression by promoting a robust spindle assembly checkpoint (SAC) during M-phase. In macrophages, IL4-induced tyrosine phosphorylation of IRS2 leads to the recruitment and activation of phosphoinositide 3-kinase (PI3K). In Homo sapiens (Human), this protein is Insulin receptor substrate 2 (IRS2).